The following is a 970-amino-acid chain: Serine/threonine-protein kinase PLK4 (970 aa).

Residues 12–265 form the Protein kinase domain; sequence FKVGNLLGKG…LSSVLDHPFM (254 aa). Residues 18–26 and K41 contribute to the ATP site; that span reads LGKGSFAGV. K45 and K46 each carry N6-acetyllysine. Catalysis depends on D136, which acts as the Proton acceptor. Disordered regions lie at residues 323–458 and 497–538; these read TVFP…NHLC and SISP…HSVK. Over residues 328 to 356 the composition is skewed to polar residues; that stretch reads NKSSTDFSSSGDGNSFYTQWGNQETSNSG. The segment covering 360–369 has biased composition (basic and acidic residues); it reads VIQDAEERPH. A compositionally biased stretch (polar residues) spans 379-393; sequence SDRSGTSNSQSQAKT. S401 bears the Phosphoserine mark. A compositionally biased stretch (polar residues) spans 438 to 454; that stretch reads SSSSGSFERPDNNQALS. Over residues 504 to 515 the composition is skewed to basic and acidic residues; the sequence is FQGHPDLQKDTS. The Cryptic POLO box 1 (CPB1) domain occupies 586 to 699; the sequence is TLRSITSPLV…SRFVQLVRSK (114 aa). At S665 the chain carries Phosphoserine. The region spanning 700–813 is the Cryptic POLO box 2 (CPB2) domain; the sequence is SPKITYFTRY…GRKPGSTSSP (114 aa). Positions 808–828 are disordered; that stretch reads GSTSSPKALSPPPSVDSNYPT. Residue S817 is modified to Phosphoserine. In terms of domain architecture, POLO box spans 886–964; the sequence is QLLKSVFVKN…LSSILLMFSN (79 aa).

The protein belongs to the protein kinase superfamily. Ser/Thr protein kinase family. CDC5/Polo subfamily. In terms of assembly, homodimer. Interacts with CEP152 (via N-terminus). Interacts with CEP78; this interaction may be important for proper PLK4 localization to the centriole and PLK4-induced overduplication of centrioles. Interacts with CEP131. Interacts simultaneously with TENT5C and CEP192. Interacts with TENT5C; this interaction leads to the TENT5C recruitment in the centrosome. Interacts with CEP85; this interaction may be important in cell migration and centriole assembly. Post-translationally, acetylation by KAT2A and KAT2B impairs kinase activity by shifting the kinase to an inactive conformation. In terms of processing, ubiquitinated; leading to its degradation by the proteasome. Deubiquitinated by USP54; leading to PLK4 stabilization. Tyrosine-phosphorylated by TEC.

The protein resides in the cytoplasm. Its subcellular location is the cytoskeleton. It is found in the microtubule organizing center. It localises to the centrosome. The protein localises to the centriole. The protein resides in the nucleus. Its subcellular location is the nucleolus. It is found in the cleavage furrow. The enzyme catalyses L-seryl-[protein] + ATP = O-phospho-L-seryl-[protein] + ADP + H(+). It catalyses the reaction L-threonyl-[protein] + ATP = O-phospho-L-threonyl-[protein] + ADP + H(+). Its function is as follows. Serine/threonine-protein kinase that plays a central role in centriole duplication. Able to trigger procentriole formation on the surface of the parental centriole cylinder, leading to the recruitment of centriole biogenesis proteins such as SASS6, CPAP, CCP110, CEP135 and gamma-tubulin. When overexpressed, it is able to induce centrosome amplification through the simultaneous generation of multiple procentrioles adjoining each parental centriole during S phase. Phosphorylates 'Ser-151' of FBXW5 during the G1/S transition, leading to inhibit FBXW5 ability to ubiquitinate SASS6. Its central role in centriole replication suggests a possible role in tumorigenesis, centrosome aberrations being frequently observed in tumors. Also involved in deuterosome-mediated centriole amplification in multiciliated that can generate more than 100 centrioles. Also involved in trophoblast differentiation by phosphorylating HAND1, leading to disrupt the interaction between HAND1 and MDFIC and activate HAND1. Phosphorylates CDC25C and CHEK2. Required for the recruitment of STIL to the centriole and for STIL-mediated centriole amplification. Phosphorylates CEP131 at 'Ser-78' and PCM1 at 'Ser-372' which is essential for proper organization and integrity of centriolar satellites. The chain is Serine/threonine-protein kinase PLK4 from Homo sapiens (Human).